Here is a 542-residue protein sequence, read N- to C-terminus: Chaperonin GroEL 1 (542 aa).

ATP-binding positions include 29–32 (TIGP), 86–90 (DGTTT), Gly-415, 479–481 (NAA), and Asp-495.

Belongs to the chaperonin (HSP60) family. As to quaternary structure, forms a cylinder of 14 subunits composed of two heptameric rings stacked back-to-back. Interacts with the co-chaperonin GroES.

Its subcellular location is the cytoplasm. The enzyme catalyses ATP + H2O + a folded polypeptide = ADP + phosphate + an unfolded polypeptide.. Its function is as follows. Together with its co-chaperonin GroES, plays an essential role in assisting protein folding. The GroEL-GroES system forms a nano-cage that allows encapsulation of the non-native substrate proteins and provides a physical environment optimized to promote and accelerate protein folding. This Streptomyces avermitilis (strain ATCC 31267 / DSM 46492 / JCM 5070 / NBRC 14893 / NCIMB 12804 / NRRL 8165 / MA-4680) protein is Chaperonin GroEL 1.